We begin with the raw amino-acid sequence, 691 residues long: Ribonucleoprotein PTB-binding 2 (691 aa).

Gly residues predominate over residues 1 to 30 (MAAAAGDGGGEGGAGLGSAAGLGPGPGLRG). The disordered stretch occupies residues 1-47 (MAAAAGDGGGEGGAGLGSAAGLGPGPGLRGQGPSAEAHEGAPDPMPA). Ala2 carries the post-translational modification N-acetylalanine. RRM domains lie at 69–140 (RKIL…LQPT), 142–220 (ALLC…WMDV), and 231–309 (KCLC…FCAP). Disordered regions lie at residues 492-522 (PNQH…EGNF) and 543-574 (GHHK…GEPP). Polar residues predominate over residues 548–569 (QQSQPKGTEISSGAASKNQTSL).

Interacts with PTBP1 and RAVER1.

The protein resides in the nucleus. Its subcellular location is the cytoplasm. In terms of biological role, may bind single-stranded nucleic acids. The protein is Ribonucleoprotein PTB-binding 2 (RAVER2) of Homo sapiens (Human).